The primary structure comprises 196 residues: Recombination protein RecR (196 aa).

The segment at 57-72 (CERCHTFTEGAVCETC) adopts a C4-type zinc-finger fold. The region spanning 80–175 (TRLCVVETPA…HVTRLARGVP (96 aa)) is the Toprim domain.

The protein belongs to the RecR family.

Functionally, may play a role in DNA repair. It seems to be involved in an RecBC-independent recombinational process of DNA repair. It may act with RecF and RecO. This Acidovorax sp. (strain JS42) protein is Recombination protein RecR.